We begin with the raw amino-acid sequence, 189 residues long: Peptidyl-tRNA hydrolase (189 aa).

Position 15 (F15) interacts with tRNA. The Proton acceptor role is filled by H20. TRNA contacts are provided by Y65, N67, and N113.

It belongs to the PTH family. As to quaternary structure, monomer.

The protein resides in the cytoplasm. The enzyme catalyses an N-acyl-L-alpha-aminoacyl-tRNA + H2O = an N-acyl-L-amino acid + a tRNA + H(+). In terms of biological role, hydrolyzes ribosome-free peptidyl-tRNAs (with 1 or more amino acids incorporated), which drop off the ribosome during protein synthesis, or as a result of ribosome stalling. Catalyzes the release of premature peptidyl moieties from peptidyl-tRNA molecules trapped in stalled 50S ribosomal subunits, and thus maintains levels of free tRNAs and 50S ribosomes. This is Peptidyl-tRNA hydrolase from Phytoplasma australiense.